The following is an 85-amino-acid chain: MVLLLSMISRCLILIILCYQRYISVFLSPRCRFYPTCSHYAVDALYTFGLLKGLLLIAKRILKCHPFHSGGLNSISIKTKSKREY.

The protein belongs to the UPF0161 family.

The protein resides in the cell membrane. Functionally, could be involved in insertion of integral membrane proteins into the membrane. The sequence is that of Putative membrane protein insertion efficiency factor from Buchnera aphidicola subsp. Baizongia pistaciae (strain Bp).